The following is a 211-amino-acid chain: MITGKLITVEGPDGAGKTTVLEQLIPLLKQKVAQEILTTREPGGVAISEYIRELILDINHTAMDPKTELLLYIAARRQHLVEKVLPALEAGQLVFIDRFIDSSVAYQGAGRGLIKADIQWLNEFATDGLEPDLTLYFDVPSEIGLARINANQQREVNRLDLETIEIHQRVRKGYLALAKEHPKRIVTIDATKPLKEVVSVALEHVLALLLA.

Residue 11-18 coordinates ATP; that stretch reads GPDGAGKT.

Belongs to the thymidylate kinase family.

It carries out the reaction dTMP + ATP = dTDP + ADP. In terms of biological role, phosphorylation of dTMP to form dTDP in both de novo and salvage pathways of dTTP synthesis. The sequence is that of Thymidylate kinase from Streptococcus pyogenes serotype M6 (strain ATCC BAA-946 / MGAS10394).